A 203-amino-acid polypeptide reads, in one-letter code: Probable deoxycytidylate deaminase (203 aa).

A CMP/dCMP-type deaminase domain is found at 27 to 163 (HWDDYFMATS…PTYRASKRML (137 aa)). A Zn(2+)-binding site is contributed by His102. The active-site Proton donor is the Glu104. Zn(2+) contacts are provided by Cys128 and Cys131.

It belongs to the cytidine and deoxycytidylate deaminase family. The cofactor is Zn(2+).

It catalyses the reaction dCMP + H2O + H(+) = dUMP + NH4(+). Its function is as follows. Supplies the nucleotide substrate for thymidylate synthetase. The chain is Probable deoxycytidylate deaminase from Drosophila melanogaster (Fruit fly).